Reading from the N-terminus, the 184-residue chain is Glutathione-regulated potassium-efflux system ancillary protein KefG (184 aa).

This sequence belongs to the NAD(P)H dehydrogenase (quinone) family. KefG subfamily. Interacts with KefB.

Its subcellular location is the cell inner membrane. It carries out the reaction a quinone + NADH + H(+) = a quinol + NAD(+). The catalysed reaction is a quinone + NADPH + H(+) = a quinol + NADP(+). Regulatory subunit of a potassium efflux system that confers protection against electrophiles. Required for full activity of KefB. This chain is Glutathione-regulated potassium-efflux system ancillary protein KefG, found in Yersinia enterocolitica serotype O:8 / biotype 1B (strain NCTC 13174 / 8081).